A 589-amino-acid polypeptide reads, in one-letter code: ATP-dependent lipid A-core flippase (589 aa).

Transmembrane regions (helical) follow at residues 29 to 49 (WLLV…STFL), 68 to 88 (ALWL…AGYI), 157 to 177 (VIGA…AILL), 254 to 274 (ISSA…LLIA), and 283 to 303 (LSPG…PALK). Residues 32 to 314 (VVAACGALLE…LTNVQNMLQS (283 aa)) enclose the ABC transmembrane type-1 domain. The 237-residue stretch at 346–582 (IEFRGITARY…DGLYAYLYSM (237 aa)) folds into the ABC transporter domain. Residue 380–387 (GRSGSGKS) participates in ATP binding.

The protein belongs to the ABC transporter superfamily. Lipid exporter (TC 3.A.1.106) family. In terms of assembly, homodimer.

It localises to the cell inner membrane. It carries out the reaction ATP + H2O + lipid A-core oligosaccharideSide 1 = ADP + phosphate + lipid A-core oligosaccharideSide 2.. Functionally, involved in lipopolysaccharide (LPS) biosynthesis. Translocates lipid A-core from the inner to the outer leaflet of the inner membrane. Transmembrane domains (TMD) form a pore in the inner membrane and the ATP-binding domain (NBD) is responsible for energy generation. The polypeptide is ATP-dependent lipid A-core flippase (Xylella fastidiosa (strain Temecula1 / ATCC 700964)).